A 318-amino-acid polypeptide reads, in one-letter code: Beta-galactosidase small subunit (318 aa).

This sequence belongs to the bacterial beta-galactosidase small subunit family. Heterodimer of a large (LacL) and a small subunit (LacM).

The enzyme catalyses Hydrolysis of terminal non-reducing beta-D-galactose residues in beta-D-galactosides.. Functionally, component of a beta-galactosidase. This chain is Beta-galactosidase small subunit, found in Latilactobacillus sakei (Lactobacillus sakei).